The sequence spans 77 residues: Neurexophilin-4 (77 aa).

The tract at residues 1-77 (NCHVEYEKTN…NFQSEHPYFG (77 aa)) is v (Cys-rich).

The protein belongs to the neurexophilin family. In terms of processing, may be proteolytically processed at the boundary between the N-terminal non-conserved and the central conserved domain in neuron-like cells.

It is found in the secreted. Its function is as follows. May be signaling molecules that resemble neuropeptides and that act by binding to alpha-neurexins and possibly other receptors. The sequence is that of Neurexophilin-4 (NXPH4) from Macaca mulatta (Rhesus macaque).